The sequence spans 248 residues: tRNA pseudouridine synthase A (248 aa).

Asp53 (nucleophile) is an active-site residue. Tyr111 is a substrate binding site.

Belongs to the tRNA pseudouridine synthase TruA family. Homodimer.

It carries out the reaction uridine(38/39/40) in tRNA = pseudouridine(38/39/40) in tRNA. In terms of biological role, formation of pseudouridine at positions 38, 39 and 40 in the anticodon stem and loop of transfer RNAs. The protein is tRNA pseudouridine synthase A of Listeria welshimeri serovar 6b (strain ATCC 35897 / DSM 20650 / CCUG 15529 / CIP 8149 / NCTC 11857 / SLCC 5334 / V8).